The following is a 568-amino-acid chain: Urease subunit alpha (568 aa).

Residues 130-568 (GGIDTHIHFI…LPMAQRYFLF (439 aa)) form the Urease domain. 3 residues coordinate Ni(2+): His135, His137, and Lys218. Position 218 is an N6-carboxylysine (Lys218). Residue His220 participates in substrate binding. Ni(2+)-binding residues include His247 and His273. Catalysis depends on His321, which acts as the Proton donor. Asp361 lines the Ni(2+) pocket.

The protein belongs to the metallo-dependent hydrolases superfamily. Urease alpha subunit family. As to quaternary structure, heterotrimer of UreA (gamma), UreB (beta) and UreC (alpha) subunits. Three heterotrimers associate to form the active enzyme. The cofactor is Ni cation. Carboxylation allows a single lysine to coordinate two nickel ions.

Its subcellular location is the cytoplasm. It catalyses the reaction urea + 2 H2O + H(+) = hydrogencarbonate + 2 NH4(+). Its pathway is nitrogen metabolism; urea degradation; CO(2) and NH(3) from urea (urease route): step 1/1. The sequence is that of Urease subunit alpha from Burkholderia pseudomallei (strain K96243).